The following is a 451-amino-acid chain: Phenylalanine--tRNA ligase, mitochondrial (451 aa).

Substrate-binding positions include 157–160 (SAHQ), R179, 186–188 (QHY), and 193–195 (QLE). N6-acetyllysine is present on K202. Residues E287 and F312 each contribute to the substrate site. Residues 358–450 (SKYPAVFNDI…AVQLLGVEGR (93 aa)) form the FDX-ACB domain.

It belongs to the class-II aminoacyl-tRNA synthetase family. As to quaternary structure, monomer.

It localises to the mitochondrion matrix. The protein resides in the mitochondrion. It catalyses the reaction tRNA(Phe) + L-phenylalanine + ATP = L-phenylalanyl-tRNA(Phe) + AMP + diphosphate + H(+). Functionally, is responsible for the charging of tRNA(Phe) with phenylalanine in mitochondrial translation. To a lesser extent, also catalyzes direct attachment of m-Tyr (an oxidized version of Phe) to tRNA(Phe), thereby opening the way for delivery of the misacylated tRNA to the ribosome and incorporation of ROS-damaged amino acid into proteins. The protein is Phenylalanine--tRNA ligase, mitochondrial (Fars2) of Mus musculus (Mouse).